The following is a 901-amino-acid chain: Protein translocase subunit SecA (901 aa).

ATP-binding positions include glutamine 85, glycine 103 to threonine 107, and aspartate 510. The segment at threonine 847 to glutamine 901 is disordered. Over residues arginine 848–serine 866 the composition is skewed to polar residues. Cysteine 882, cysteine 884, cysteine 893, and histidine 894 together coordinate Zn(2+). The segment covering lysine 888–glutamine 901 has biased composition (basic residues).

The protein belongs to the SecA family. As to quaternary structure, monomer and homodimer. Part of the essential Sec protein translocation apparatus which comprises SecA, SecYEG and auxiliary proteins SecDF-YajC and YidC. Requires Zn(2+) as cofactor.

The protein resides in the cell inner membrane. It is found in the cytoplasm. The catalysed reaction is ATP + H2O + cellular proteinSide 1 = ADP + phosphate + cellular proteinSide 2.. Part of the Sec protein translocase complex. Interacts with the SecYEG preprotein conducting channel. Has a central role in coupling the hydrolysis of ATP to the transfer of proteins into and across the cell membrane, serving both as a receptor for the preprotein-SecB complex and as an ATP-driven molecular motor driving the stepwise translocation of polypeptide chains across the membrane. This Haemophilus influenzae (strain PittGG) protein is Protein translocase subunit SecA.